The chain runs to 367 residues: Aminomethyltransferase (367 aa).

The protein belongs to the GcvT family. As to quaternary structure, the glycine cleavage system is composed of four proteins: P, T, L and H.

It catalyses the reaction N(6)-[(R)-S(8)-aminomethyldihydrolipoyl]-L-lysyl-[protein] + (6S)-5,6,7,8-tetrahydrofolate = N(6)-[(R)-dihydrolipoyl]-L-lysyl-[protein] + (6R)-5,10-methylene-5,6,7,8-tetrahydrofolate + NH4(+). In terms of biological role, the glycine cleavage system catalyzes the degradation of glycine. The sequence is that of Aminomethyltransferase from Mycobacterium avium (strain 104).